Reading from the N-terminus, the 767-residue chain is 5-methyltetrahydropteroyltriglutamate--homocysteine methyltransferase (767 aa).

Residues 17-20 and lysine 117 each bind 5-methyltetrahydropteroyltri-L-glutamate; that span reads RELK. Residues 441–443 and glutamate 494 contribute to the L-homocysteine site; that span reads IGS. Residues 441-443 and glutamate 494 each bind L-methionine; that span reads IGS. 5-methyltetrahydropteroyltri-L-glutamate is bound by residues 525–526 and tryptophan 571; that span reads RC. Residue aspartate 609 coordinates L-homocysteine. Position 609 (aspartate 609) interacts with L-methionine. Position 615 (glutamate 615) interacts with 5-methyltetrahydropteroyltri-L-glutamate. Zn(2+)-binding residues include histidine 652, cysteine 654, and glutamate 676. The active-site Proton donor is the histidine 705. Cysteine 737 contacts Zn(2+).

The protein belongs to the vitamin-B12 independent methionine synthase family. Zn(2+) is required as a cofactor.

It carries out the reaction 5-methyltetrahydropteroyltri-L-glutamate + L-homocysteine = tetrahydropteroyltri-L-glutamate + L-methionine. It functions in the pathway amino-acid biosynthesis; L-methionine biosynthesis via de novo pathway; L-methionine from L-homocysteine (MetE route): step 1/1. Catalyzes the transfer of a methyl group from 5-methyltetrahydrofolate to homocysteine resulting in methionine formation. This chain is 5-methyltetrahydropteroyltriglutamate--homocysteine methyltransferase, found in Bifidobacterium longum (strain NCC 2705).